A 215-amino-acid chain; its full sequence is Programmed cell death protein 10 homolog (215 aa).

The protein belongs to the PDCD10 family. Interacts with gck-1. In terms of tissue distribution, expressed in pharynx, intestine, germline, vulva and excretory canals.

The protein localises to the cytoplasm. It localises to the apical cell membrane. Functionally, involved in excretory canal elongation during postembryonic development. Plays a role in promoting Golgi stability, ER integrity and vesicle transport probably by regulating the activation of Rho GTPase cdc-42. Involved in fertility. The protein is Programmed cell death protein 10 homolog of Caenorhabditis elegans.